The chain runs to 498 residues: Cytochrome P450 71B5 (498 aa).

A helical membrane pass occupies residues 3–23; the sequence is IFLCFLLLLPLSLIFLKKLLP. Cysteine 439 is a heme binding site.

This sequence belongs to the cytochrome P450 family. Requires heme as cofactor.

Its subcellular location is the membrane. The sequence is that of Cytochrome P450 71B5 (CYP71B5) from Arabidopsis thaliana (Mouse-ear cress).